Consider the following 364-residue polypeptide: Envelope glycoprotein US27 (364 aa).

The Virion surface segment spans residues 1 to 36 (MTTSTTTTTNIMLQVSNVTNHTLNSTEIYQLFEYTR). N-linked (GlcNAc...) asparagine; by host glycans are attached at residues asparagine 17, asparagine 20, and asparagine 24. A helical transmembrane segment spans residues 37-57 (FGVWLMCIVGTFLNMLVITTI). Residues 58–69 (LYYRRKKKSPSD) are Intravirion-facing. A helical transmembrane segment spans residues 70–90 (TYICNLAVADLLIVVGLPFFL). Residues 91–103 (EYAKHHPKLSREV) are Virion surface-facing. A helical membrane pass occupies residues 104–124 (VCSGLNACFYICLFAGVCFLI). At 125-150 (NLSMDRYCVIVWGVELNRVRNNKRAT) the chain is on the intravirion side. Residues 151 to 171 (CWVVIFWILAALMGMPHYLMY) traverse the membrane as a helical segment. Topologically, residues 172–188 (SHTNNECVGEFANETSG) are virion surface. A helical membrane pass occupies residues 189 to 209 (WFPVFLNTKVNICGYLAPIVL). The Intravirion segment spans residues 210–234 (MAYTYNRMVRFIINYVGKWHMQTLH). The chain crosses the membrane as a helical span at residues 235–255 (VLLVVVVSFASFWFPFNLALF). Residues 256–279 (LESIRLLSGTQNETLQTVITFCLY) are Virion surface-facing. A helical membrane pass occupies residues 280–300 (VGQFLAYVRACLNPGIYILVG). The Intravirion portion of the chain corresponds to 301 to 364 (TQMRKDMWTT…MESGEEEFLL (64 aa)). Residues 344–364 (KRTHYDRKHAPMESGEEEFLL) are disordered.

It belongs to the G-protein coupled receptor 1 family. As to quaternary structure, heterodimerizes with US28.

Its subcellular location is the virion. The protein resides in the host cell membrane. Its function is as follows. Plays an important role in spread of HCMV via the extracellular route. As a G-protein-coupled receptor (vGPCR), may activate signaling pathways important for virion assembly or egress processes. The chain is Envelope glycoprotein US27 (US27) from Homo sapiens (Human).